We begin with the raw amino-acid sequence, 407 residues long: 5-aminolevulinate synthase 2 (407 aa).

Residues arginine 21 and serine 137 each contribute to the substrate site. Pyridoxal 5'-phosphate-binding residues include serine 189, histidine 217, and threonine 245. Lysine 248 is a catalytic residue. An N6-(pyridoxal phosphate)lysine modification is found at lysine 248. Residues threonine 277 and threonine 278 each coordinate pyridoxal 5'-phosphate. Residue threonine 363 participates in substrate binding.

It belongs to the class-II pyridoxal-phosphate-dependent aminotransferase family. As to quaternary structure, homodimer. The cofactor is pyridoxal 5'-phosphate.

The catalysed reaction is succinyl-CoA + glycine + H(+) = 5-aminolevulinate + CO2 + CoA. It functions in the pathway porphyrin-containing compound metabolism; protoporphyrin-IX biosynthesis; 5-aminolevulinate from glycine: step 1/1. This is 5-aminolevulinate synthase 2 (hemT) from Cereibacter sphaeroides (strain ATCC 17023 / DSM 158 / JCM 6121 / CCUG 31486 / LMG 2827 / NBRC 12203 / NCIMB 8253 / ATH 2.4.1.) (Rhodobacter sphaeroides).